The following is a 142-amino-acid chain: Nucleoside diphosphate kinase (142 aa).

ATP contacts are provided by Lys11, Phe59, Arg87, Thr93, Arg104, and Asn114. Catalysis depends on His117, which acts as the Pros-phosphohistidine intermediate.

Belongs to the NDK family. In terms of assembly, homotetramer. Mg(2+) serves as cofactor.

Its subcellular location is the cytoplasm. It catalyses the reaction a 2'-deoxyribonucleoside 5'-diphosphate + ATP = a 2'-deoxyribonucleoside 5'-triphosphate + ADP. It carries out the reaction a ribonucleoside 5'-diphosphate + ATP = a ribonucleoside 5'-triphosphate + ADP. Major role in the synthesis of nucleoside triphosphates other than ATP. The ATP gamma phosphate is transferred to the NDP beta phosphate via a ping-pong mechanism, using a phosphorylated active-site intermediate. The chain is Nucleoside diphosphate kinase from Marinobacter nauticus (strain ATCC 700491 / DSM 11845 / VT8) (Marinobacter aquaeolei).